The primary structure comprises 765 residues: Cyanobacterial phytochrome A (765 aa).

The interval 20–510 is chromophore binding domain; the sequence is IHLSGQIQPH…RKAIVNIVLR (491 aa). A GAF domain is found at 152–320; sequence NLRDFCQIIV…VIFAEISARE (169 aa). Cys-259 contacts a tetrapyrrole. The Histidine kinase domain occupies 535–748; the sequence is VASHDLQEPL…TFYFTIPVGG (214 aa). The residue at position 538 (His-538) is a Phosphohistidine; by autocatalysis.

In the N-terminal section; belongs to the phytochrome family. In terms of processing, contains one covalently linked tetrapyrrole chromophore.

The catalysed reaction is ATP + protein L-histidine = ADP + protein N-phospho-L-histidine.. Photoreceptor which exists in two forms that are reversibly interconvertible by light: the R form that absorbs maximally in the red region of the spectrum and the FR form that absorbs maximally in the far-red region. This Nostoc sp. (strain PCC 7120 / SAG 25.82 / UTEX 2576) protein is Cyanobacterial phytochrome A (aphA).